Reading from the N-terminus, the 241-residue chain is Uridylate kinase (241 aa).

12–15 (KLSG) provides a ligand contact to ATP. The tract at residues 20-25 (GDKGTG) is involved in allosteric activation by GTP. Glycine 54 is a binding site for UMP. Residues glycine 55 and arginine 59 each contribute to the ATP site. UMP contacts are provided by residues aspartate 74 and 135 to 142 (TGSPYFST). Residues asparagine 163, tyrosine 169, and aspartate 172 each contribute to the ATP site.

Belongs to the UMP kinase family. As to quaternary structure, homohexamer.

The protein resides in the cytoplasm. It catalyses the reaction UMP + ATP = UDP + ADP. The protein operates within pyrimidine metabolism; CTP biosynthesis via de novo pathway; UDP from UMP (UMPK route): step 1/1. Allosterically activated by GTP. Inhibited by UTP. Its function is as follows. Catalyzes the reversible phosphorylation of UMP to UDP. The sequence is that of Uridylate kinase from Pediococcus pentosaceus (strain ATCC 25745 / CCUG 21536 / LMG 10740 / 183-1w).